We begin with the raw amino-acid sequence, 87 residues long: HssA/B-like protein 58 (87 aa).

The span at 1–13 shows a compositional bias: polar residues; sequence MTILSAITSISRP. The segment at 1 to 31 is disordered; the sequence is MTILSAITSISRPNKSSKSVISSNGGSSLSM. Residues 14-31 are compositionally biased toward low complexity; it reads NKSSKSVISSNGGSSLSM.

The protein belongs to the hssA/B family.

This chain is HssA/B-like protein 58 (hssl58), found in Dictyostelium discoideum (Social amoeba).